The primary structure comprises 587 residues: MEDLSETFDIYAICACCKVLNDDEKVRCFNNKTFKGIGNAGVLPWKCNLIDMKYFSSVTSYINENNYIRLKWKRDKYMEKHNLKNNVELNTNIISSTNNLQNIVVMGKKSWESIPKKFKPLQNRINIILSRTLKKEDIVNENNNENNNVIIIKSVDDLFPILKCTKYYKCFIIGGSSVYKEFLDRNLIKKIYFTRINNSYNCDVLFPEINENLFKITSISDVYYSNNTTLDFIIYSKTKEINPNEEVPNNTFLGVCDEQNKAFDDEDDYTYFSFNKNKENIKKNSEHAHNFKIYNSIKYKNHPEYQYLNIIYDIIMHGNKQDDRTGVGVLSKFGYMMKFNLNEYFPLLTTKKLFIRGIIEELLWFIRGETNGNTLLEKNVRIWEANGTREFLDNRKLFHREVNDLGPIYGFQWRHFGAEYTDMHDNYKDKGVDQLKNIINLIKNDPTCRRIILCAWNVKNLDQMALPPCHILCQFYVFDGKLSCIMYQRSCDLGLGVPFNIASYSIFTYMIAQVCNLQAAEFIHVLGNAHVYNNHIESLKIQLNRTPYPFPTLKLNPDIKNIEDFTISDFTVQNYVHHDKINMDMAA.

The 229-residue stretch at Asp-9–Lys-237 folds into the DHFR domain. Residue Gly-36 to Val-42 coordinates NADP(+). Asp-51 lines the substrate pocket. Residues Lys-108–Ser-110 and Leu-129–Thr-132 contribute to the NADP(+) site. 3 residues coordinate substrate: Ile-173, Tyr-179, and Thr-194. Gly-174–Glu-181 is a binding site for NADP(+). A thymidylate synthase region spans residues Asn-301–Ala-587. Arg-324 serves as a coordination point for dUMP. Cys-469 is an active-site residue. DUMP contacts are provided by residues His-470, Gln-488–Asp-492, Asn-500, and His-530–Tyr-532.

It in the N-terminal section; belongs to the dihydrofolate reductase family. The protein in the C-terminal section; belongs to the thymidylate synthase family. In terms of assembly, homodimer.

The enzyme catalyses (6S)-5,6,7,8-tetrahydrofolate + NADP(+) = 7,8-dihydrofolate + NADPH + H(+). It carries out the reaction dUMP + (6R)-5,10-methylene-5,6,7,8-tetrahydrofolate = 7,8-dihydrofolate + dTMP. It functions in the pathway cofactor biosynthesis; tetrahydrofolate biosynthesis; 5,6,7,8-tetrahydrofolate from 7,8-dihydrofolate: step 1/1. Bifunctional enzyme. Involved in de novo dTMP biosynthesis. Key enzyme in folate metabolism. Catalyzes an essential reaction for de novo glycine and purine synthesis, DNA precursor synthesis, and for the conversion of dUMP to dTMP. The protein is Bifunctional dihydrofolate reductase-thymidylate synthase of Plasmodium berghei (strain Anka).